The primary structure comprises 562 residues: Probable tRNA (uracil-O(2)-)-methyltransferase (562 aa).

Residues valine 520–asparagine 546 are disordered. Residues asparagine 535–histidine 562 form a C3H1-type zinc finger.

This sequence belongs to the TRM44 family.

The protein localises to the cytoplasm. It catalyses the reaction uridine(44) in tRNA(Ser) + S-adenosyl-L-methionine = 2'-O-methyluridine(44) in tRNA(Ser) + S-adenosyl-L-homocysteine + H(+). In terms of biological role, probable adenosyl-L-methionine (AdoMet)-dependent tRNA (uracil-O(2)-)-methyltransferase. This chain is Probable tRNA (uracil-O(2)-)-methyltransferase, found in Caenorhabditis briggsae.